The following is a 253-amino-acid chain: Triosephosphate isomerase, cytosolic (253 aa).

Asn10 and Lys12 together coordinate substrate. Residue His96 is the Electrophile of the active site. Glu166 (proton acceptor) is an active-site residue.

This sequence belongs to the triosephosphate isomerase family. As to quaternary structure, homodimer.

The protein localises to the cytoplasm. The enzyme catalyses D-glyceraldehyde 3-phosphate = dihydroxyacetone phosphate. It participates in carbohydrate biosynthesis; gluconeogenesis. It functions in the pathway carbohydrate degradation; glycolysis; D-glyceraldehyde 3-phosphate from glycerone phosphate: step 1/1. The polypeptide is Triosephosphate isomerase, cytosolic (TPI) (Oryza sativa subsp. japonica (Rice)).